The following is a 409-amino-acid chain: Elongation factor Tu (409 aa).

Positions 10–214 (KPHVNIGTIG…AVDSYIPDPE (205 aa)) constitute a tr-type G domain. The segment at 19-26 (GHVDHGKT) is G1. 19–26 (GHVDHGKT) contacts GTP. Position 26 (T26) interacts with Mg(2+). The segment at 60-64 (GITIN) is G2. The tract at residues 81–84 (DCPG) is G3. Residues 81–85 (DCPGH) and 136–139 (NKED) contribute to the GTP site. Residues 136 to 139 (NKED) are G4. The segment at 174–176 (SGL) is G5.

Belongs to the TRAFAC class translation factor GTPase superfamily. Classic translation factor GTPase family. EF-Tu/EF-1A subfamily. As to quaternary structure, monomer.

Its subcellular location is the cytoplasm. It carries out the reaction GTP + H2O = GDP + phosphate + H(+). Its function is as follows. GTP hydrolase that promotes the GTP-dependent binding of aminoacyl-tRNA to the A-site of ribosomes during protein biosynthesis. The sequence is that of Elongation factor Tu from Trichormus variabilis (strain ATCC 29413 / PCC 7937) (Anabaena variabilis).